The following is a 99-amino-acid chain: MNPDNYLYLSALLFTIGAAGVLLRRNAIVMFMCVELMLNAGNLAFVTFARVHGNLDGQVVAFFTMVVAACEVVIGLAIIMTIFRTRRSANVDAASLLRH.

Helical transmembrane passes span 3 to 23 (PDNY…GVLL), 28 to 48 (IVMF…FVTF), and 59 to 79 (VVAF…LAII).

It belongs to the complex I subunit 4L family. In terms of assembly, NDH-1 is composed of 14 different subunits. Subunits NuoA, H, J, K, L, M, N constitute the membrane sector of the complex.

Its subcellular location is the cell membrane. It catalyses the reaction a quinone + NADH + 5 H(+)(in) = a quinol + NAD(+) + 4 H(+)(out). Functionally, NDH-1 shuttles electrons from NADH, via FMN and iron-sulfur (Fe-S) centers, to quinones in the respiratory chain. The immediate electron acceptor for the enzyme in this species is believed to be a menaquinone. Couples the redox reaction to proton translocation (for every two electrons transferred, four hydrogen ions are translocated across the cytoplasmic membrane), and thus conserves the redox energy in a proton gradient. The polypeptide is NADH-quinone oxidoreductase subunit K (Mycolicibacterium gilvum (strain PYR-GCK) (Mycobacterium gilvum (strain PYR-GCK))).